Reading from the N-terminus, the 411-residue chain is Acetylornithine aminotransferase, mitochondrial (411 aa).

N6-(pyridoxal phosphate)lysine is present on Lys-262.

It belongs to the class-III pyridoxal-phosphate-dependent aminotransferase family. Pyridoxal 5'-phosphate is required as a cofactor.

The protein localises to the mitochondrion matrix. It catalyses the reaction N(2)-acetyl-L-ornithine + 2-oxoglutarate = N-acetyl-L-glutamate 5-semialdehyde + L-glutamate. The protein operates within amino-acid biosynthesis; L-arginine biosynthesis; N(2)-acetyl-L-ornithine from L-glutamate: step 4/4. The protein is Acetylornithine aminotransferase, mitochondrial (ARG8) of Yarrowia lipolytica (strain CLIB 122 / E 150) (Yeast).